Reading from the N-terminus, the 414-residue chain is Tyrosine--tRNA ligase (414 aa).

Residue Tyr38 coordinates L-tyrosine. The short motif at 43 to 52 (PTATSLHLGN) is the 'HIGH' region element. 2 residues coordinate L-tyrosine: Tyr165 and Gln169. The short motif at 228-232 (KFGKS) is the 'KMSKS' region element. Lys231 lines the ATP pocket. An S4 RNA-binding domain is found at 349–414 (FNANQIIDLG…KKYFFIIELI (66 aa)).

The protein belongs to the class-I aminoacyl-tRNA synthetase family. TyrS type 1 subfamily. Homodimer.

It is found in the cytoplasm. The catalysed reaction is tRNA(Tyr) + L-tyrosine + ATP = L-tyrosyl-tRNA(Tyr) + AMP + diphosphate + H(+). Its function is as follows. Catalyzes the attachment of tyrosine to tRNA(Tyr) in a two-step reaction: tyrosine is first activated by ATP to form Tyr-AMP and then transferred to the acceptor end of tRNA(Tyr). The polypeptide is Tyrosine--tRNA ligase (Mesomycoplasma hyopneumoniae (strain 232) (Mycoplasma hyopneumoniae)).